The following is a 424-amino-acid chain: Glutamate-1-semialdehyde 2,1-aminomutase (424 aa).

N6-(pyridoxal phosphate)lysine is present on Lys-263.

The protein belongs to the class-III pyridoxal-phosphate-dependent aminotransferase family. HemL subfamily. In terms of assembly, homodimer. Pyridoxal 5'-phosphate serves as cofactor.

The protein resides in the cytoplasm. The enzyme catalyses (S)-4-amino-5-oxopentanoate = 5-aminolevulinate. It participates in porphyrin-containing compound metabolism; protoporphyrin-IX biosynthesis; 5-aminolevulinate from L-glutamyl-tRNA(Glu): step 2/2. This Campylobacter jejuni (strain RM1221) protein is Glutamate-1-semialdehyde 2,1-aminomutase.